A 277-amino-acid polypeptide reads, in one-letter code: uncharacterized protein (277 aa).

The segment at His-256–Ser-277 is disordered.

Its function is as follows. This protein may be involved in virus assembly. Essential for virus function. This is an uncharacterized protein from Saccharolobus solfataricus (Sulfolobus solfataricus).